The primary structure comprises 109 residues: Major allergen I polypeptide chain 2 (109 aa).

The signal sequence occupies residues 1–17 (MRGALLVLALLVTQALG). Asn-50 is a glycosylation site (N-linked (GlcNAc...) asparagine).

Belongs to the secretoglobin family. As to quaternary structure, heterotetramer composed of two non-covalently linked disulfide-linked heterodimer of chains 1 and 2. In terms of tissue distribution, the long form is preferentially expressed in the salivary gland, while the short form is preferentially expressed in the skin.

Its subcellular location is the secreted. The protein is Major allergen I polypeptide chain 2 (CH2) of Felis catus (Cat).